A 219-amino-acid polypeptide reads, in one-letter code: Resolvase (219 aa).

The Resolvase/invertase-type recombinase catalytic domain occupies 15-159; it reads VARIYLRAST…EDRRERQRQG (145 aa). The active-site O-(5'-phospho-DNA)-serine intermediate is the serine 23.

It belongs to the site-specific recombinase resolvase family.

In terms of biological role, involved in plasmid partition. This chain is Resolvase (parA), found in Escherichia coli.